The sequence spans 176 residues: ATP-dependent protease subunit HslV (176 aa).

Threonine 2 is an active-site residue. 3 residues coordinate Na(+): glycine 157, cysteine 160, and threonine 163.

The protein belongs to the peptidase T1B family. HslV subfamily. As to quaternary structure, a double ring-shaped homohexamer of HslV is capped on each side by a ring-shaped HslU homohexamer. The assembly of the HslU/HslV complex is dependent on binding of ATP.

Its subcellular location is the cytoplasm. It catalyses the reaction ATP-dependent cleavage of peptide bonds with broad specificity.. Its activity is regulated as follows. Allosterically activated by HslU binding. In terms of biological role, protease subunit of a proteasome-like degradation complex believed to be a general protein degrading machinery. The protein is ATP-dependent protease subunit HslV of Escherichia coli O139:H28 (strain E24377A / ETEC).